Here is a 369-residue protein sequence, read N- to C-terminus: MRN complex-interacting protein (369 aa).

Serine 115 carries the post-translational modification Phosphoserine. Disordered regions lie at residues 122 to 150 (GGGVCFNSQPSSETEKPDPPFSTGLPRKR), 209 to 245 (PSFTQDRAGLAGKGRESSREDLDTMELVPRGEPPCPA), and 282 to 317 (AQAEQGAPRAQTPREGGLCRLPGARQSPQTTHTPMP). The Nuclear localization signal (NLS) motif lies at 148 to 151 (RKRK). Over residues 221 to 230 (KGRESSREDL) the composition is skewed to basic and acidic residues. The segment at 223–259 (RESSREDLDTMELVPRGEPPCPAQQVRTMSKWEQCLG) is necessary for the association with the MRN complex.

The protein belongs to the MRNIP family. Associates with the MRE11-RAD50-NBN (MRN) damage-sensing complex; this association is constitutive. Interacts with MRE11. Interacts with NBN. Interacts with RAD50. Phosphorylated; phosphorylation is constitutive and occurs in the absence of any DNA-damaging stimulus. Phosphorylation on Ser-115 is necessary for its nuclear retention.

The protein localises to the nucleus. It is found in the nucleoplasm. In terms of biological role, plays a role in the cellular response to DNA damage and the maintenance of genome stability through its association with the MRN damage-sensing complex. Promotes chromatin loading and activity of the MRN complex to facilitate subsequent ATM-mediated DNA damage response signaling and DNA repair. The chain is MRN complex-interacting protein from Bos taurus (Bovine).